The following is a 126-amino-acid chain: Fumarate reductase subunit C (126 aa).

Helical transmembrane passes span 30–50 (IFVA…GAGG), 64–84 (VVVV…VTWF), and 105–125 (VLAG…WMVL).

This sequence belongs to the FrdC family. Part of an enzyme complex containing four subunits: a flavoprotein (FrdA), an iron-sulfur protein (FrdB), and two hydrophobic anchor proteins (FrdC and FrdD).

The protein localises to the cell membrane. Anchors the catalytic components of the fumarate reductase complex to the cell membrane, binds quinones. The sequence is that of Fumarate reductase subunit C from Mycobacterium tuberculosis (strain CDC 1551 / Oshkosh).